Reading from the N-terminus, the 271-residue chain is Phosphatidylinositol transfer protein beta isoform (271 aa).

Lys215 bears the N6-acetyllysine mark. Residue Ser262 is modified to Phosphoserine; by PKC.

It belongs to the PtdIns transfer protein family. PI transfer class I subfamily. Post-translationally, constitutive phosphorylation of Ser-262 has no effect on phospholipid transfer activity but is required for Golgi targeting.

It localises to the golgi apparatus. Its subcellular location is the golgi apparatus membrane. The protein resides in the endoplasmic reticulum membrane. It catalyses the reaction a 1,2-diacyl-sn-glycero-3-phosphocholine(in) = a 1,2-diacyl-sn-glycero-3-phosphocholine(out). The catalysed reaction is a 1,2-diacyl-sn-glycero-3-phospho-(1D-myo-inositol)(in) = a 1,2-diacyl-sn-glycero-3-phospho-(1D-myo-inositol)(out). It carries out the reaction an N-(acyl)-sphingosylphosphocholine(in) = an N-(acyl)-sphingosylphosphocholine(out). Functionally, catalyzes the transfer of phosphatidylinositol, phosphatidylcholine and sphingomyelin between membranes. Required for COPI-mediated retrograde transport from the Golgi to the endoplasmic reticulum; phosphatidylinositol and phosphatidylcholine transfer activity is essential for this function. This Mus musculus (Mouse) protein is Phosphatidylinositol transfer protein beta isoform (Pitpnb).